The following is a 286-amino-acid chain: NADPH-dependent 7-cyano-7-deazaguanine reductase (286 aa).

Substrate is bound at residue 88-90; the sequence is VES. 90–91 is a binding site for NADPH; the sequence is SK. The active-site Thioimide intermediate is Cys194. Asp201 serves as the catalytic Proton donor. 233 to 234 contacts substrate; that stretch reads HE. Residue 262-263 coordinates NADPH; it reads RG.

This sequence belongs to the GTP cyclohydrolase I family. QueF type 2 subfamily. As to quaternary structure, homodimer.

Its subcellular location is the cytoplasm. It carries out the reaction 7-aminomethyl-7-carbaguanine + 2 NADP(+) = 7-cyano-7-deazaguanine + 2 NADPH + 3 H(+). The protein operates within tRNA modification; tRNA-queuosine biosynthesis. Functionally, catalyzes the NADPH-dependent reduction of 7-cyano-7-deazaguanine (preQ0) to 7-aminomethyl-7-deazaguanine (preQ1). The polypeptide is NADPH-dependent 7-cyano-7-deazaguanine reductase (Colwellia psychrerythraea (strain 34H / ATCC BAA-681) (Vibrio psychroerythus)).